The sequence spans 156 residues: Putative pre-16S rRNA nuclease (156 aa).

This sequence belongs to the YqgF nuclease family.

The protein resides in the cytoplasm. Could be a nuclease involved in processing of the 5'-end of pre-16S rRNA. In Streptomyces avermitilis (strain ATCC 31267 / DSM 46492 / JCM 5070 / NBRC 14893 / NCIMB 12804 / NRRL 8165 / MA-4680), this protein is Putative pre-16S rRNA nuclease.